Here is a 449-residue protein sequence, read N- to C-terminus: DNA-directed RNA polymerase subunit Rpo1C (449 aa).

Residues 1–68 (MQDVIKKIED…EGEELLKAVE (68 aa)) are unknown. A DNA-directed RNA polymerase subunit Rpo1C region spans residues 69-449 (DEYLRILKVR…TGSVSVIMKK (381 aa)).

The protein belongs to the RNA polymerase beta' chain family. As to quaternary structure, part of the RNA polymerase complex.

Its subcellular location is the cytoplasm. The catalysed reaction is RNA(n) + a ribonucleoside 5'-triphosphate = RNA(n+1) + diphosphate. DNA-dependent RNA polymerase (RNAP) catalyzes the transcription of DNA into RNA using the four ribonucleoside triphosphates as substrates. Forms part of the jaw domain. The chain is DNA-directed RNA polymerase subunit Rpo1C from Methanothermobacter thermautotrophicus (strain Winter) (Methanobacterium thermoautotrophicum).